The primary structure comprises 149 residues: Heavy metal-associated isoprenylated plant protein 21 (149 aa).

In terms of domain architecture, HMA spans Leu-25 to Glu-88. Positions 36 and 39 each coordinate a metal cation. Cys-146 bears the Cysteine methyl ester mark. Cys-146 is lipidated: S-farnesyl cysteine. The propeptide at Ser-147–Met-149 is removed in mature form.

This sequence belongs to the HIPP family. As to quaternary structure, interacts with ZHD11/HB29. Expressed at low levels in leaves and sepals.

It is found in the membrane. In terms of biological role, heavy-metal-binding protein. Binds cadmium. May be involved in cadmium transport and play a role in cadmium detoxification. The polypeptide is Heavy metal-associated isoprenylated plant protein 21 (Arabidopsis thaliana (Mouse-ear cress)).